Here is a 405-residue protein sequence, read N- to C-terminus: MENIMTLPKIKHVRAWFIGGATAEKGAGGGDYHDQGGNHWIDDHIATPMSKYRDYEQSRQSFGINVLGTLIVEVEAENGQTGFAVSTAGEMGCFIVEKHLNRFIEGKCVSDIKLIHDQMLGATMYYSGSGGLVMNTISCVDLALWDLFGKVVGLPVYKLLGGAVRDEIQFYATGARPDLAKEMGFIGGKMPAHWGPHDGDAGIRKDAAMVADMREKCGPDFWLMLDCWMSQDVNYATKLAHACAPFNLKWIEECLPPQQYEGYRELKRNAPAGMMVTSGEHHGTLQSFRTLAETGIDIMQPDVGWCGGLTTLVEIAALAKSRGQLVVPHGSSVYSHHAVITFTNTPFSEFLMTSPDCSTLRPQFDPILLDEPVPVNGRIHKSVLDKPGFGVELNRDCHLKRPYSH.

Residues H33 and R59 each coordinate substrate. Mg(2+) is bound by residues D226, E252, and E280. H329 acts as the Proton acceptor in catalysis. Residue E349 coordinates substrate.

This sequence belongs to the mandelate racemase/muconate lactonizing enzyme family. RhamD subfamily. Homooctamer; tetramer of dimers. The cofactor is Mg(2+).

The catalysed reaction is L-rhamnonate = 2-dehydro-3-deoxy-L-rhamnonate + H2O. Its function is as follows. Catalyzes the dehydration of L-rhamnonate to 2-keto-3-deoxy-L-rhamnonate (KDR). This chain is L-rhamnonate dehydratase, found in Salmonella paratyphi A (strain AKU_12601).